The sequence spans 473 residues: H(+)/Cl(-) exchange transporter ClcA (473 aa).

The Cytoplasmic segment spans residues methionine 1–proline 32. A helical membrane pass occupies residues leucine 33–valine 69. At glutamine 70–phenylalanine 76 the chain is on the periplasmic side. Residues leucine 77–phenylalanine 100 traverse the membrane as a helical segment. A Selectivity filter part_1 motif is present at residues glycine 106–proline 110. Serine 107 provides a ligand contact to chloride. The segment at residues isoleucine 109–leucine 116 is an intramembrane region (helical). Residues glutamate 117–arginine 123 are Cytoplasmic-facing. The next 2 helical transmembrane spans lie at tryptophan 124–alanine 141 and glutamate 148–phenylalanine 166. The Selectivity filter part_2 motif lies at glycine 146 to proline 150. Residues arginine 167–threonine 176 are Cytoplasmic-facing. Intramembrane regions (helical) lie at residues leucine 177 to alanine 189 and proline 193 to isoleucine 201. At glutamate 202–serine 214 the chain is on the cytoplasmic side. Residues isoleucine 215 to phenylalanine 232 traverse the membrane as a helical segment. Residues asparagine 233–leucine 252 lie on the Periplasmic side of the membrane. Residues tryptophan 253–glutamine 281 form a helical membrane-spanning segment. Residues arginine 282 to glutamate 287 are Cytoplasmic-facing. The helical transmembrane segment at isoleucine 288 to glutamate 309 threads the bilayer. Over proline 310–serine 329 the chain is Periplasmic. The next 2 membrane-spanning stretches (helical) occupy residues valine 330–serine 349 and glycine 355–alanine 376. The Selectivity filter part_3 motif lies at glycine 355–proline 359. Positions 356 and 357 each coordinate chloride. Topologically, residues valine 377–alanine 386 are periplasmic. Residues glycine 387–serine 401 constitute an intramembrane region (helical). Residues valine 402 to alanine 404 constitute an intramembrane region (note=Loop between two helices). Positions proline 405–threonine 416 form an intramembrane region, helical. Positions aspartate 417–leucine 421 form an intramembrane region, note=Loop between two helices. A helical membrane pass occupies residues isoleucine 422–phenylalanine 438. Residues leucine 439 to threonine 473 are Cytoplasmic-facing. Tyrosine 445 contacts chloride.

The protein belongs to the chloride channel (TC 2.A.49) family. ClcA subfamily. Homodimer.

The protein resides in the cell inner membrane. The enzyme catalyses 2 chloride(in) + H(+)(out) = 2 chloride(out) + H(+)(in). In terms of biological role, proton-coupled chloride transporter. Functions as antiport system and exchanges two chloride ions for 1 proton. Probably acts as an electrical shunt for an outwardly-directed proton pump that is linked to amino acid decarboxylation, as part of the extreme acid resistance (XAR) response. The chain is H(+)/Cl(-) exchange transporter ClcA from Salmonella schwarzengrund (strain CVM19633).